Reading from the N-terminus, the 1054-residue chain is Filament-like plant protein 6 (1054 aa).

Coiled coils occupy residues Val64–His139, Ala174–Glu200, and Ser250–Leu341. Disordered stretches follow at residues Arg359–Phe390 and Glu448–Asp506. Composition is skewed to low complexity over residues Val371 to Pro380, Gln450 to Leu461, and Ser470 to Ser494. Positions Glu389–Val463 form a coiled coil. Coiled-coil stretches lie at residues Gln637–Asp666 and Glu788–Leu944. Residues Phe951 to Tyr1054 form a disordered region. A compositionally biased stretch (low complexity) spans Pro1007–Ser1032.

The protein belongs to the FPP family. In terms of assembly, interacts with WPP/MAF proteins.

In Arabidopsis thaliana (Mouse-ear cress), this protein is Filament-like plant protein 6 (FPP6).